The sequence spans 241 residues: Pyridoxal phosphate phosphatase PHOSPHO2 (241 aa).

Asp-8 (nucleophile) is an active-site residue. The Mg(2+) site is built by Asp-8 and Asp-10. Asp-10 acts as the Proton donor in catalysis. The substrate site is built by Asp-19 and Asp-99. Asp-179 contacts Mg(2+).

The protein belongs to the HAD-like hydrolase superfamily. PHOSPHO family. Mg(2+) serves as cofactor.

It carries out the reaction pyridoxal 5'-phosphate + H2O = pyridoxal + phosphate. Phosphatase that has high activity toward pyridoxal 5'-phosphate (PLP). Also active at much lower level toward pyrophosphate, phosphoethanolamine (PEA), phosphocholine (PCho), phospho-l-tyrosine, fructose-6-phosphate, p-nitrophenyl phosphate, and h-glycerophosphate. This is Pyridoxal phosphate phosphatase PHOSPHO2 (Phospho2) from Rattus norvegicus (Rat).